The chain runs to 346 residues: Holliday junction branch migration complex subunit RuvB (346 aa).

Residues 1–181 are large ATPase domain (RuvB-L); it reads MSDRNPLIDA…FGIPVRLNFY (181 aa). ATP-binding positions include Leu20, Arg21, Gly62, Lys65, Thr66, Thr67, 128 to 130, Arg171, Tyr181, and Arg218; that span reads EDF. Residue Thr66 coordinates Mg(2+). A small ATPAse domain (RuvB-S) region spans residues 182-252; it reads TVEELEYIVR…IADEALSRLE (71 aa). The tract at residues 255–346 is head domain (RuvB-H); it reads NRGLDQLDRR…SQYGLFMEDE (92 aa). The DNA site is built by Arg291, Arg310, and Arg315.

This sequence belongs to the RuvB family. Homohexamer. Forms an RuvA(8)-RuvB(12)-Holliday junction (HJ) complex. HJ DNA is sandwiched between 2 RuvA tetramers; dsDNA enters through RuvA and exits via RuvB. An RuvB hexamer assembles on each DNA strand where it exits the tetramer. Each RuvB hexamer is contacted by two RuvA subunits (via domain III) on 2 adjacent RuvB subunits; this complex drives branch migration. In the full resolvosome a probable DNA-RuvA(4)-RuvB(12)-RuvC(2) complex forms which resolves the HJ.

Its subcellular location is the cytoplasm. It catalyses the reaction ATP + H2O = ADP + phosphate + H(+). In terms of biological role, the RuvA-RuvB-RuvC complex processes Holliday junction (HJ) DNA during genetic recombination and DNA repair, while the RuvA-RuvB complex plays an important role in the rescue of blocked DNA replication forks via replication fork reversal (RFR). RuvA specifically binds to HJ cruciform DNA, conferring on it an open structure. The RuvB hexamer acts as an ATP-dependent pump, pulling dsDNA into and through the RuvAB complex. RuvB forms 2 homohexamers on either side of HJ DNA bound by 1 or 2 RuvA tetramers; 4 subunits per hexamer contact DNA at a time. Coordinated motions by a converter formed by DNA-disengaged RuvB subunits stimulates ATP hydrolysis and nucleotide exchange. Immobilization of the converter enables RuvB to convert the ATP-contained energy into a lever motion, pulling 2 nucleotides of DNA out of the RuvA tetramer per ATP hydrolyzed, thus driving DNA branch migration. The RuvB motors rotate together with the DNA substrate, which together with the progressing nucleotide cycle form the mechanistic basis for DNA recombination by continuous HJ branch migration. Branch migration allows RuvC to scan DNA until it finds its consensus sequence, where it cleaves and resolves cruciform DNA. The polypeptide is Holliday junction branch migration complex subunit RuvB (Brucella melitensis biotype 2 (strain ATCC 23457)).